A 131-amino-acid polypeptide reads, in one-letter code: Large ribosomal subunit protein bL19 (131 aa).

Belongs to the bacterial ribosomal protein bL19 family.

This protein is located at the 30S-50S ribosomal subunit interface and may play a role in the structure and function of the aminoacyl-tRNA binding site. The polypeptide is Large ribosomal subunit protein bL19 (Afipia carboxidovorans (strain ATCC 49405 / DSM 1227 / KCTC 32145 / OM5) (Oligotropha carboxidovorans)).